The following is a 72-amino-acid chain: UPF0270 protein YheU (72 aa).

It belongs to the UPF0270 family.

The protein is UPF0270 protein YheU of Shigella flexneri serotype 5b (strain 8401).